Consider the following 552-residue polypeptide: MTKFVFVTGGVVSSLGKGIASASLAAILESRGLKVTLIKLDPYINVDPGTMSPFQHGEVFVTDDGAETDLDLGHYERFIETRMKQSNNFTTGRIYQSVLEKERRGDYLGKTVQVIPHVTNEIQEYIKRGAGLGTPDAVDVAICEVGGTVGDIESLPFLEAVRQLALKQGPNNTAFVHLTYLPWIATAGELKTKPTQHTVQKLREIGIQPDALLCRAQHQVPEEEKEKISLFTNVPEWGVISMWDVDTIYKVPRMLHEQGLDGLICDKLRLNTPPTNLKRWDDLVHETEHPQGEVKIAMVGKYVELSDAYKSVNEALKHAGMQSHVAVKITHVDSETISDANARDKLSQYDAILVPGGFGSRGVEGKISTARYARENKVPYLGICLGMQVATIEYARHVAGLEGANSTEFDPKSANPVIALITEWKDADGTVKTRDENSDLGGTMRLGAQSSDVQAGTLAHSIYGDVVTERHRHRYEANVQYLDQLREAGLVISALTQREQLTEIVELPKEVHPWYIGVQFHPEFKSTPWSGHPLFNAFVKAAIERQKAPRKP.

Positions 1-270 (MTKFVFVTGG…DGLICDKLRL (270 aa)) are amidoligase domain. Position 13 (serine 13) interacts with CTP. Serine 13 serves as a coordination point for UTP. Residues 14–19 (SLGKGI) and aspartate 71 contribute to the ATP site. Positions 71 and 144 each coordinate Mg(2+). CTP contacts are provided by residues 151-153 (DIE), 191-196 (KTKPTQ), and lysine 227. UTP is bound by residues 191 to 196 (KTKPTQ) and lysine 227. One can recognise a Glutamine amidotransferase type-1 domain in the interval 295–548 (KIAMVGKYVE…VKAAIERQKA (254 aa)). Position 357 (glycine 357) interacts with L-glutamine. Catalysis depends on cysteine 384, which acts as the Nucleophile; for glutamine hydrolysis. Residues 385-388 (LGMQ), glutamate 408, and arginine 474 each bind L-glutamine. Residues histidine 521 and glutamate 523 contribute to the active site.

The protein belongs to the CTP synthase family. Homotetramer.

It carries out the reaction UTP + L-glutamine + ATP + H2O = CTP + L-glutamate + ADP + phosphate + 2 H(+). The enzyme catalyses L-glutamine + H2O = L-glutamate + NH4(+). The catalysed reaction is UTP + NH4(+) + ATP = CTP + ADP + phosphate + 2 H(+). Its pathway is pyrimidine metabolism; CTP biosynthesis via de novo pathway; CTP from UDP: step 2/2. Its activity is regulated as follows. Allosterically activated by GTP, when glutamine is the substrate; GTP has no effect on the reaction when ammonia is the substrate. The allosteric effector GTP functions by stabilizing the protein conformation that binds the tetrahedral intermediate(s) formed during glutamine hydrolysis. Inhibited by the product CTP, via allosteric rather than competitive inhibition. In terms of biological role, catalyzes the ATP-dependent amination of UTP to CTP with either L-glutamine or ammonia as the source of nitrogen. Regulates intracellular CTP levels through interactions with the four ribonucleotide triphosphates. In Delftia acidovorans (strain DSM 14801 / SPH-1), this protein is CTP synthase.